Reading from the N-terminus, the 448-residue chain is Probable glycine dehydrogenase (decarboxylating) subunit 1 (448 aa).

The protein belongs to the GcvP family. N-terminal subunit subfamily. In terms of assembly, the glycine cleavage system is composed of four proteins: P, T, L and H. In this organism, the P 'protein' is a heterodimer of two subunits.

The catalysed reaction is N(6)-[(R)-lipoyl]-L-lysyl-[glycine-cleavage complex H protein] + glycine + H(+) = N(6)-[(R)-S(8)-aminomethyldihydrolipoyl]-L-lysyl-[glycine-cleavage complex H protein] + CO2. Its function is as follows. The glycine cleavage system catalyzes the degradation of glycine. The P protein binds the alpha-amino group of glycine through its pyridoxal phosphate cofactor; CO(2) is released and the remaining methylamine moiety is then transferred to the lipoamide cofactor of the H protein. The sequence is that of Probable glycine dehydrogenase (decarboxylating) subunit 1 from Bacillus pumilus (strain SAFR-032).